A 354-amino-acid chain; its full sequence is Quinone-reactive Ni/Fe-hydrogenase small chain (354 aa).

The segment at residues 1-36 (MLEEKGIERRDFMKWAGAMTAMLSLPATFTPLTAKA) is a signal peptide (tat-type signal). The [4Fe-4S] cluster site is built by C53, C56, C153, C186, H224, C227, C252, and C258. Positions 267, 286, and 289 each coordinate [3Fe-4S] cluster.

It belongs to the [NiFe]/[NiFeSe] hydrogenase small subunit family. In terms of assembly, heterodimer of a large and a small subunit. The cofactor is [4Fe-4S] cluster. [3Fe-4S] cluster is required as a cofactor. Predicted to be exported by the Tat system. The position of the signal peptide cleavage has been experimentally proven.

Its subcellular location is the cell membrane. The enzyme catalyses H2 + a menaquinone = a menaquinol. The sequence is that of Quinone-reactive Ni/Fe-hydrogenase small chain (hydA) from Wolinella succinogenes (strain ATCC 29543 / DSM 1740 / CCUG 13145 / JCM 31913 / LMG 7466 / NCTC 11488 / FDC 602W) (Vibrio succinogenes).